Reading from the N-terminus, the 164-residue chain is Phosphopantetheine adenylyltransferase (164 aa).

Substrate is bound at residue Thr9. ATP is bound by residues 9–10 and His17; that span reads TF. Positions 41, 73, and 87 each coordinate substrate. ATP is bound by residues 88–90, Glu98, and 123–129; these read GLR and YMFISAT.

Belongs to the bacterial CoaD family. In terms of assembly, homohexamer. The cofactor is Mg(2+).

It localises to the cytoplasm. It carries out the reaction (R)-4'-phosphopantetheine + ATP + H(+) = 3'-dephospho-CoA + diphosphate. It functions in the pathway cofactor biosynthesis; coenzyme A biosynthesis; CoA from (R)-pantothenate: step 4/5. Functionally, reversibly transfers an adenylyl group from ATP to 4'-phosphopantetheine, yielding dephospho-CoA (dPCoA) and pyrophosphate. This chain is Phosphopantetheine adenylyltransferase, found in Nitrosomonas eutropha (strain DSM 101675 / C91 / Nm57).